The chain runs to 333 residues: 2-oxoglutarate-dependent dioxygenase 21, chloroplastic (333 aa).

The transit peptide at 1–43 (MPAVAGSLYMASQHKGVPPPLPPPPRPLPVINLGRLTMDSASR) directs the protein to the chloroplast. Positions 180–281 (GVQFVALNNY…RISIASIHGL (102 aa)) constitute a Fe2OG dioxygenase domain. Residues histidine 205, aspartate 207, and histidine 262 each coordinate Fe cation. Arginine 272 is a binding site for 2-oxoglutarate.

It belongs to the iron/ascorbate-dependent oxidoreductase family. Requires Fe(2+) as cofactor. The cofactor is L-ascorbate. As to expression, expressed in roots.

The protein resides in the plastid. It localises to the chloroplast. The enzyme catalyses melatonin + 2-oxoglutarate + O2 = 2-hydroxymelatonin + succinate + CO2. In terms of biological role, involved in melatonin degradation. Catalyzes the hydroxylation of melatonin to produce 2-hydroxymelatonin. The polypeptide is 2-oxoglutarate-dependent dioxygenase 21, chloroplastic (Oryza sativa subsp. japonica (Rice)).